The sequence spans 70 residues: Small, acid-soluble spore protein 1 (70 aa).

It belongs to the alpha/beta-type SASP family.

Functionally, SASP are bound to spore DNA. They are double-stranded DNA-binding proteins that cause DNA to change to an a-like conformation. They protect the DNA backbone from chemical and enzymatic cleavage and are thus involved in dormant spore's high resistance to UV light. The polypeptide is Small, acid-soluble spore protein 1 (Bacillus subtilis).